We begin with the raw amino-acid sequence, 89 residues long: Small ribosomal subunit protein uS15 (89 aa).

This sequence belongs to the universal ribosomal protein uS15 family. As to quaternary structure, part of the 30S ribosomal subunit. Forms a bridge to the 50S subunit in the 70S ribosome, contacting the 23S rRNA.

Functionally, one of the primary rRNA binding proteins, it binds directly to 16S rRNA where it helps nucleate assembly of the platform of the 30S subunit by binding and bridging several RNA helices of the 16S rRNA. Forms an intersubunit bridge (bridge B4) with the 23S rRNA of the 50S subunit in the ribosome. The polypeptide is Small ribosomal subunit protein uS15 (Mycobacteroides abscessus (strain ATCC 19977 / DSM 44196 / CCUG 20993 / CIP 104536 / JCM 13569 / NCTC 13031 / TMC 1543 / L948) (Mycobacterium abscessus)).